The chain runs to 165 residues: UBA-like domain-containing protein 2-B (165 aa).

The interval 119–165 is disordered; the sequence is QQPVWLPPASPTAHLHHHHHHPQPVWPPNSQPTGGPQKAMAAMDGQR.

Belongs to the UBALD family.

The polypeptide is UBA-like domain-containing protein 2-B (ubald2-b) (Xenopus laevis (African clawed frog)).